The primary structure comprises 788 residues: Ribonucleoside-diphosphate reductase subunit alpha (788 aa).

Positions 2–92 constitute an ATP-cone domain; the sequence is ITVVKRNGRI…LYDLYHKVSG (91 aa). ATP contacts are provided by residues Lys-6, 12–18, and Thr-52; that span reads EPLDITK. Thr-200 contributes to the GDP binding site. Cys-216 and Cys-497 are oxidised to a cystine. DTTP is bound by residues 223 to 225 and Arg-253; that span reads DNI. Asn-424 contacts GDP. Residue Asn-424 is the Proton acceptor of the active site. Residue Cys-426 is the Cysteine radical intermediate of the active site. GDP is bound by residues Glu-428 and 661 to 663; that span reads SSI. Glu-428 (proton acceptor) is an active-site residue.

Belongs to the ribonucleoside diphosphate reductase large chain family. Tetramer of two alpha and two beta subunits.

The enzyme catalyses a 2'-deoxyribonucleoside 5'-diphosphate + [thioredoxin]-disulfide + H2O = a ribonucleoside 5'-diphosphate + [thioredoxin]-dithiol. Its activity is regulated as follows. Under complex allosteric control mediated by deoxynucleoside triphosphates and ATP binding to separate specificity and activation sites on the alpha subunit. The type of nucleotide bound at the specificity site determines substrate preference. It seems probable that ATP makes the enzyme reduce CDP and UDP, dGTP favors ADP reduction and dTTP favors GDP reduction. Stimulated by ATP and inhibited by dATP binding to the activity site. Provides the precursors necessary for DNA synthesis. Catalyzes the biosynthesis of deoxyribonucleotides from the corresponding ribonucleotides. This Helicobacter pylori (strain J99 / ATCC 700824) (Campylobacter pylori J99) protein is Ribonucleoside-diphosphate reductase subunit alpha (nrdA).